The primary structure comprises 148 residues: Secretory phospholipase A2 (148 aa).

A signal peptide spans 1–23 (MKLSVLLALGASSLAAAAPAATA). A glycan (N-linked (GlcNAc...) asparagine) is linked at Asn-61. Cysteines 62 and 78 form a disulfide. His-81 is an active-site residue. Asp-82 is a binding site for Ca(2+).

The protein belongs to the phospholipase A2 family. Requires Ca(2+) as cofactor.

Its subcellular location is the secreted. It catalyses the reaction a 1,2-diacyl-sn-glycero-3-phosphocholine + H2O = a 1-acyl-sn-glycero-3-phosphocholine + a fatty acid + H(+). Its function is as follows. Secretory phospholipase that catalyzes the calcium-dependent hydrolysis of the 2-acyl groups in 3-sn-phosphoglycerides. Increases the ability to utilize host-derived nutrients and lipids, and promotes lipid dropplets accumulation. Plays a role in virulence. The polypeptide is Secretory phospholipase A2 (Arthroderma benhamiae (strain ATCC MYA-4681 / CBS 112371) (Trichophyton mentagrophytes)).